The sequence spans 323 residues: tRNA U34 carboxymethyltransferase (323 aa).

Carboxy-S-adenosyl-L-methionine-binding positions include K91, W105, K110, G130, 152 to 154, 181 to 182, M196, Y200, and R315; these read DPT and IE.

It belongs to the class I-like SAM-binding methyltransferase superfamily. CmoB family. As to quaternary structure, homotetramer.

It carries out the reaction carboxy-S-adenosyl-L-methionine + 5-hydroxyuridine(34) in tRNA = 5-carboxymethoxyuridine(34) in tRNA + S-adenosyl-L-homocysteine + H(+). Its function is as follows. Catalyzes carboxymethyl transfer from carboxy-S-adenosyl-L-methionine (Cx-SAM) to 5-hydroxyuridine (ho5U) to form 5-carboxymethoxyuridine (cmo5U) at position 34 in tRNAs. The polypeptide is tRNA U34 carboxymethyltransferase (Escherichia coli (strain K12 / MC4100 / BW2952)).